Consider the following 135-residue polypeptide: Histone H2B.4 (135 aa).

Basic and acidic residues-rich tracts occupy residues 1–12 (MAPKAAEKKPVE) and 23–35 (EKKV…GGEK). The tract at residues 1-43 (MAPKAAEKKPVEKTPAVKKPKAEKKVPTSKEGGEKKGKKKSKK) is disordered. 2 positions are modified to N6-acetyllysine: K8 and K24. Residue K131 forms a Glycyl lysine isopeptide (Lys-Gly) (interchain with G-Cter in ubiquitin) linkage.

This sequence belongs to the histone H2B family. As to quaternary structure, the nucleosome is a histone octamer containing two molecules each of H2A, H2B, H3 and H4 assembled in one H3-H4 heterotetramer and two H2A-H2B heterodimers. The octamer wraps approximately 147 bp of DNA. Post-translationally, can be acetylated to form H2BK6ac and H2BK33ac. Monoubiquitinated to form H2BK143ub1; may give a specific tag for epigenetic transcriptional activation. As to expression, expressed preferentially in meristematic tissues.

It is found in the nucleus. The protein resides in the chromosome. Core component of nucleosome. Nucleosomes wrap and compact DNA into chromatin, limiting DNA accessibility to the cellular machineries which require DNA as a template. Histones thereby play a central role in transcription regulation, DNA repair, DNA replication and chromosomal stability. DNA accessibility is regulated via a complex set of post-translational modifications of histones, also called histone code, and nucleosome remodeling. The sequence is that of Histone H2B.4 (TH153) from Triticum aestivum (Wheat).